We begin with the raw amino-acid sequence, 269 residues long: Diaminopimelate epimerase (269 aa).

3 residues coordinate substrate: Asn-15, Gln-49, and Asn-66. Catalysis depends on Cys-75, which acts as the Proton donor. Substrate is bound by residues 76-77 (GN), Asn-155, Asn-187, and 204-205 (ER). Catalysis depends on Cys-213, which acts as the Proton acceptor. 214-215 (GS) lines the substrate pocket.

The protein belongs to the diaminopimelate epimerase family. As to quaternary structure, homodimer.

Its subcellular location is the cytoplasm. The enzyme catalyses (2S,6S)-2,6-diaminopimelate = meso-2,6-diaminopimelate. It participates in amino-acid biosynthesis; L-lysine biosynthesis via DAP pathway; DL-2,6-diaminopimelate from LL-2,6-diaminopimelate: step 1/1. Functionally, catalyzes the stereoinversion of LL-2,6-diaminopimelate (L,L-DAP) to meso-diaminopimelate (meso-DAP), a precursor of L-lysine and an essential component of the bacterial peptidoglycan. The protein is Diaminopimelate epimerase of Rickettsia bellii (strain OSU 85-389).